Reading from the N-terminus, the 450-residue chain is Bifunctional protein GlmU (450 aa).

Residues 1–221 (MRCIVLAAGM…SCEFIGINNR (221 aa)) are pyrophosphorylase. UDP-N-acetyl-alpha-D-glucosamine-binding positions include 6 to 9 (LAAG), Lys-20, Gln-69, 74 to 75 (GT), 96 to 98 (YGD), Gly-135, Glu-150, Asn-165, and Asn-219. Residue Asp-98 coordinates Mg(2+). Asn-219 is a binding site for Mg(2+). Residues 222 to 242 (IQLAQAEKFRRQWILEELMIK) are linker. An N-acetyltransferase region spans residues 243-450 (GVTIVDPETT…VIDKRKKEED (208 aa)). UDP-N-acetyl-alpha-D-glucosamine is bound by residues Arg-324 and Lys-342. The Proton acceptor role is filled by His-354. UDP-N-acetyl-alpha-D-glucosamine-binding residues include Tyr-357 and Asn-368. Positions 371, 396, 414, and 431 each coordinate acetyl-CoA.

This sequence in the N-terminal section; belongs to the N-acetylglucosamine-1-phosphate uridyltransferase family. The protein in the C-terminal section; belongs to the transferase hexapeptide repeat family. In terms of assembly, homotrimer. It depends on Mg(2+) as a cofactor.

The protein resides in the cytoplasm. It carries out the reaction alpha-D-glucosamine 1-phosphate + acetyl-CoA = N-acetyl-alpha-D-glucosamine 1-phosphate + CoA + H(+). It catalyses the reaction N-acetyl-alpha-D-glucosamine 1-phosphate + UTP + H(+) = UDP-N-acetyl-alpha-D-glucosamine + diphosphate. It participates in nucleotide-sugar biosynthesis; UDP-N-acetyl-alpha-D-glucosamine biosynthesis; N-acetyl-alpha-D-glucosamine 1-phosphate from alpha-D-glucosamine 6-phosphate (route II): step 2/2. The protein operates within nucleotide-sugar biosynthesis; UDP-N-acetyl-alpha-D-glucosamine biosynthesis; UDP-N-acetyl-alpha-D-glucosamine from N-acetyl-alpha-D-glucosamine 1-phosphate: step 1/1. It functions in the pathway bacterial outer membrane biogenesis; LPS lipid A biosynthesis. Catalyzes the last two sequential reactions in the de novo biosynthetic pathway for UDP-N-acetylglucosamine (UDP-GlcNAc). The C-terminal domain catalyzes the transfer of acetyl group from acetyl coenzyme A to glucosamine-1-phosphate (GlcN-1-P) to produce N-acetylglucosamine-1-phosphate (GlcNAc-1-P), which is converted into UDP-GlcNAc by the transfer of uridine 5-monophosphate (from uridine 5-triphosphate), a reaction catalyzed by the N-terminal domain. The polypeptide is Bifunctional protein GlmU (Pseudothermotoga lettingae (strain ATCC BAA-301 / DSM 14385 / NBRC 107922 / TMO) (Thermotoga lettingae)).